Here is a 428-residue protein sequence, read N- to C-terminus: Adenosylmethionine-8-amino-7-oxononanoate aminotransferase (428 aa).

W52 is a substrate binding site. 112-113 is a pyridoxal 5'-phosphate binding site; that stretch reads GS. Y144 is a substrate binding site. D245 provides a ligand contact to pyridoxal 5'-phosphate. The substrate site is built by K274 and G307. K274 carries the post-translational modification N6-(pyridoxal phosphate)lysine. 308-309 contributes to the pyridoxal 5'-phosphate binding site; that stretch reads PT. R391 is a binding site for substrate.

It belongs to the class-III pyridoxal-phosphate-dependent aminotransferase family. BioA subfamily. As to quaternary structure, homodimer. Requires pyridoxal 5'-phosphate as cofactor.

It localises to the cytoplasm. It catalyses the reaction (8S)-8-amino-7-oxononanoate + S-adenosyl-L-methionine = S-adenosyl-4-methylsulfanyl-2-oxobutanoate + (7R,8S)-7,8-diammoniononanoate. The protein operates within cofactor biosynthesis; biotin biosynthesis; 7,8-diaminononanoate from 8-amino-7-oxononanoate (SAM route): step 1/1. Its function is as follows. Catalyzes the transfer of the alpha-amino group from S-adenosyl-L-methionine (SAM) to 7-keto-8-aminopelargonic acid (KAPA) to form 7,8-diaminopelargonic acid (DAPA). It is the only aminotransferase known to utilize SAM as an amino donor. In Buchnera aphidicola subsp. Acyrthosiphon pisum (strain APS) (Acyrthosiphon pisum symbiotic bacterium), this protein is Adenosylmethionine-8-amino-7-oxononanoate aminotransferase.